Here is a 343-residue protein sequence, read N- to C-terminus: GTP 3',8-cyclase (343 aa).

The 226-residue stretch at 19-244 (PFGRNISYLR…TDLDDSTGGP (226 aa)) folds into the Radical SAM core domain. A GTP-binding site is contributed by arginine 28. Positions 35 and 39 each coordinate [4Fe-4S] cluster. Tyrosine 41 provides a ligand contact to S-adenosyl-L-methionine. Cysteine 42 provides a ligand contact to [4Fe-4S] cluster. GTP is bound at residue arginine 77. Glycine 81 provides a ligand contact to S-adenosyl-L-methionine. Threonine 111 contacts GTP. Serine 135 is a binding site for S-adenosyl-L-methionine. Residue lysine 171 coordinates GTP. Residue methionine 205 participates in S-adenosyl-L-methionine binding. Positions 268 and 271 each coordinate [4Fe-4S] cluster. GTP is bound at residue 273-275 (RVR). Cysteine 285 contacts [4Fe-4S] cluster.

It belongs to the radical SAM superfamily. MoaA family. Monomer and homodimer. [4Fe-4S] cluster serves as cofactor.

The catalysed reaction is GTP + AH2 + S-adenosyl-L-methionine = (8S)-3',8-cyclo-7,8-dihydroguanosine 5'-triphosphate + 5'-deoxyadenosine + L-methionine + A + H(+). Its pathway is cofactor biosynthesis; molybdopterin biosynthesis. Functionally, catalyzes the cyclization of GTP to (8S)-3',8-cyclo-7,8-dihydroguanosine 5'-triphosphate. This chain is GTP 3',8-cyclase, found in Nitrobacter winogradskyi (strain ATCC 25391 / DSM 10237 / CIP 104748 / NCIMB 11846 / Nb-255).